The chain runs to 197 residues: NADH-quinone oxidoreductase subunit C (197 aa).

It belongs to the complex I 30 kDa subunit family. NDH-1 is composed of 14 different subunits. Subunits NuoB, C, D, E, F, and G constitute the peripheral sector of the complex.

The protein localises to the cell inner membrane. The catalysed reaction is a quinone + NADH + 5 H(+)(in) = a quinol + NAD(+) + 4 H(+)(out). In terms of biological role, NDH-1 shuttles electrons from NADH, via FMN and iron-sulfur (Fe-S) centers, to quinones in the respiratory chain. The immediate electron acceptor for the enzyme in this species is believed to be ubiquinone. Couples the redox reaction to proton translocation (for every two electrons transferred, four hydrogen ions are translocated across the cytoplasmic membrane), and thus conserves the redox energy in a proton gradient. The chain is NADH-quinone oxidoreductase subunit C from Rickettsia typhi (strain ATCC VR-144 / Wilmington).